The chain runs to 507 residues: Beta-glucosidase 3 (507 aa).

The signal sequence occupies residues 1–23 (MELTLSLLTIFLLFFALSGRCSD). Q41 contacts a beta-D-glucoside. N64 is a glycosylation site (N-linked (GlcNAc...) asparagine). Residues H138 and 183 to 184 (NE) contribute to the a beta-D-glucoside site. E184 (proton donor) is an active-site residue. C203 and C210 are oxidised to a cystine. N-linked (GlcNAc...) asparagine glycans are attached at residues N209 and N214. Residue Y326 participates in a beta-D-glucoside binding. N-linked (GlcNAc...) asparagine glycosylation occurs at N361. A beta-D-glucoside is bound at residue E394. Catalysis depends on E394, which acts as the Nucleophile. N429 carries an N-linked (GlcNAc...) asparagine glycan. 2 residues coordinate a beta-D-glucoside: W439 and F455. 3 N-linked (GlcNAc...) asparagine glycosylation sites follow: N461, N485, and N500.

It belongs to the glycosyl hydrolase 1 family.

The enzyme catalyses Hydrolysis of terminal, non-reducing beta-D-glucosyl residues with release of beta-D-glucose.. This is Beta-glucosidase 3 from Arabidopsis thaliana (Mouse-ear cress).